A 313-amino-acid polypeptide reads, in one-letter code: MMENYKHTTVLLDEAVNGLNIRPDGIYIDGTFGRGGHSRLILSQLGEEGRLLAIDRDPQAIAVAKTIDDPRFSIIHGPFSALGEYVAERDLIGKIDGILLDLGVSSPQLDDAERGFSFMRDGPLDMRMDPTRGQSAAEWLQTAEEADIAWVLKTYGEEHFAKRIARAIVERNREQPMTRTKELAEVVAAATPVKDKFKHPATRTFQAVRIWVNSELEEIEQALKSSLNVLAPGGRLSIISFHSLEDRIVKRFMRENSRGPQVPAGLPMTEEQLKKLGGRQLRALGKLMPGEDEVAENPRARSSVLRIAERTNA.

Residues 35 to 37, aspartate 55, phenylalanine 79, aspartate 101, and glutamine 108 contribute to the S-adenosyl-L-methionine site; that span reads GGH.

The protein belongs to the methyltransferase superfamily. RsmH family.

It localises to the cytoplasm. The enzyme catalyses cytidine(1402) in 16S rRNA + S-adenosyl-L-methionine = N(4)-methylcytidine(1402) in 16S rRNA + S-adenosyl-L-homocysteine + H(+). In terms of biological role, specifically methylates the N4 position of cytidine in position 1402 (C1402) of 16S rRNA. The polypeptide is Ribosomal RNA small subunit methyltransferase H (Shigella flexneri serotype 5b (strain 8401)).